The sequence spans 154 residues: MFGAEKGSTDKLDGRKFSIGIVQARFNESVTNALAEACKQELAALGVEEKNIKHVKVPGALEVPCALQAMAESDKYDALIALGCIIRGETYHFELVANESGSAVTRLALDYQLPIANAILTTENLAQAEARQIEKGRDAARVAVEMANLLDELA.

5-amino-6-(D-ribitylamino)uracil is bound by residues Phe-26, 60–62 (ALE), and 84–86 (CII). 89–90 (ET) contributes to the (2S)-2-hydroxy-3-oxobutyl phosphate binding site. Catalysis depends on His-92, which acts as the Proton donor. Asn-117 contributes to the 5-amino-6-(D-ribitylamino)uracil binding site. Arg-131 lines the (2S)-2-hydroxy-3-oxobutyl phosphate pocket.

Belongs to the DMRL synthase family.

The enzyme catalyses (2S)-2-hydroxy-3-oxobutyl phosphate + 5-amino-6-(D-ribitylamino)uracil = 6,7-dimethyl-8-(1-D-ribityl)lumazine + phosphate + 2 H2O + H(+). It participates in cofactor biosynthesis; riboflavin biosynthesis; riboflavin from 2-hydroxy-3-oxobutyl phosphate and 5-amino-6-(D-ribitylamino)uracil: step 1/2. Its function is as follows. Catalyzes the formation of 6,7-dimethyl-8-ribityllumazine by condensation of 5-amino-6-(D-ribitylamino)uracil with 3,4-dihydroxy-2-butanone 4-phosphate. This is the penultimate step in the biosynthesis of riboflavin. This Polaromonas sp. (strain JS666 / ATCC BAA-500) protein is 6,7-dimethyl-8-ribityllumazine synthase.